The primary structure comprises 514 residues: 5'-AMP-activated protein kinase subunit gamma-3 (514 aa).

Disordered stretches follow at residues 1–121 (MELA…FPKA) and 134–155 (DNPP…SDSN). Polar residues predominate over residues 59–71 (SRSWPSRAVTTSS). 3 consecutive CBS domains span residues 222 to 283 (MATS…RSPL), 305 to 363 (CFKP…GTLL), and 380 to 440 (TFRD…HLDM). ADP is bound by residues arginine 250, 265–270 (MLTITD), valine 310, 331–332 (HR), and lysine 350. AMP is bound by residues arginine 250, 265-270 (MLTITD), valine 310, histidine 331, 331-332 (HR), lysine 350, threonine 380, alanine 385, 406-407 (SA), 422-425 (SRFD), arginine 449, leucine 457, histidine 478, 478-479 (HR), and 494-497 (SLSD). ATP is bound by residues arginine 250, 265–270 (MLTITD), valine 310, 331–332 (HR), arginine 332, and lysine 350. An AMPK pseudosubstrate motif is present at residues 318–339 (LFEAVYALIKNRIHRLPVLDPV). ADP contacts are provided by residues 422–425 (SRFD), arginine 449, leucine 457, and 478–479 (HR). ATP is bound by residues 422–425 (SRFD), arginine 449, leucine 457, and 478–479 (HR). A CBS 4 domain is found at 452–511 (CLEGVLSCQPHETLGEVIDRIVREQVHRLVLVDETQHLLGVVSLSDILQALVLSPAGIDA).

This sequence belongs to the 5'-AMP-activated protein kinase gamma subunit family. In terms of assembly, AMPK is a heterotrimer of an alpha catalytic subunit (PRKAA1 or PRKAA2), a beta (PRKAB1 or PRKAB2) and a gamma non-catalytic subunits (PRKAG1, PRKAG2 or PRKAG3). Interacts with FNIP1 and FNIP2. Post-translationally, phosphorylated by ULK1; leading to negatively regulate AMPK activity and suggesting the existence of a regulatory feedback loop between ULK1 and AMPK. Glycosylated; O-GlcNAcylated by OGT, promoting the AMP-activated protein kinase (AMPK) activity. In terms of tissue distribution, muscle.

Its function is as follows. AMP/ATP-binding subunit of AMP-activated protein kinase (AMPK), an energy sensor protein kinase that plays a key role in regulating cellular energy metabolism. In response to reduction of intracellular ATP levels, AMPK activates energy-producing pathways and inhibits energy-consuming processes: inhibits protein, carbohydrate and lipid biosynthesis, as well as cell growth and proliferation. AMPK acts via direct phosphorylation of metabolic enzymes, and by longer-term effects via phosphorylation of transcription regulators. AMPK also acts as a regulator of cellular polarity by remodeling the actin cytoskeleton; probably by indirectly activating myosin. The AMPK gamma3 subunit is a non-catalytic subunit with a regulatory role in muscle energy metabolism. It mediates binding to AMP, ADP and ATP, leading to AMPK activation or inhibition: AMP-binding results in allosteric activation of alpha catalytic subunit (PRKAA1 or PRKAA2) both by inducing phosphorylation and preventing dephosphorylation of catalytic subunits. ADP also stimulates phosphorylation, without stimulating already phosphorylated catalytic subunit. ATP promotes dephosphorylation of catalytic subunit, rendering the AMPK enzyme inactive. This is 5'-AMP-activated protein kinase subunit gamma-3 (PRKAG3) from Sus scrofa (Pig).